The chain runs to 416 residues: Lipoyl synthase, mitochondrial (416 aa).

A mitochondrion-targeting transit peptide spans 1–33 (MAAPTRSLRRLSSFRTTISPSLTVTAPIGCRSY). Positions 132, 137, 143, 163, 167, 170, and 378 each coordinate [4Fe-4S] cluster. The region spanning 148 to 367 (DKSSATATIM…RQRALDMGFL (220 aa)) is the Radical SAM core domain. A disordered region spans residues 396-416 (GSGTAERTVDQTAATTDEATR). A compositionally biased stretch (polar residues) spans 405 to 416 (DQTAATTDEATR).

The protein belongs to the radical SAM superfamily. Lipoyl synthase family. The cofactor is [4Fe-4S] cluster.

The protein resides in the mitochondrion. The catalysed reaction is [[Fe-S] cluster scaffold protein carrying a second [4Fe-4S](2+) cluster] + N(6)-octanoyl-L-lysyl-[protein] + 2 oxidized [2Fe-2S]-[ferredoxin] + 2 S-adenosyl-L-methionine + 4 H(+) = [[Fe-S] cluster scaffold protein] + N(6)-[(R)-dihydrolipoyl]-L-lysyl-[protein] + 4 Fe(3+) + 2 hydrogen sulfide + 2 5'-deoxyadenosine + 2 L-methionine + 2 reduced [2Fe-2S]-[ferredoxin]. The protein operates within protein modification; protein lipoylation via endogenous pathway; protein N(6)-(lipoyl)lysine from octanoyl-[acyl-carrier-protein]: step 2/2. Functionally, catalyzes the radical-mediated insertion of two sulfur atoms into the C-6 and C-8 positions of the octanoyl moiety bound to the lipoyl domains of lipoate-dependent enzymes, thereby converting the octanoylated domains into lipoylated derivatives. The protein is Lipoyl synthase, mitochondrial of Penicillium rubens (strain ATCC 28089 / DSM 1075 / NRRL 1951 / Wisconsin 54-1255) (Penicillium chrysogenum).